Consider the following 592-residue polypeptide: MHLYRTHTCGQLRASDTGSKVRLSGWVHRKRDHGGLIFIDLRDHYGLTQLVVSPSTPGFDLVEHVRAESVIRVDGEVVARSAETVNPNLPTGEIEVVVRQVEVLSEAAELPLPVFGEPEYPEDIRLKYRYLDLRRETLHRNIVLRSQVIQSIRRRMIDQGFLEFQTPILTASSPEGARDFLVPSRLHPTKFYALPQAPQQFKQLLMVSGFDRYFQIAPCFRDEDLRADRSLEFYQLDVEMSFVTQDDVFAAIEPVMHGVFTEFGEGKPVTPYPFPRIPYREAIAKYGSDKPDLRNPIEMQDVSEHFRGGGFGLFARILEDAKNAVWAIPGPKGGSRAFCDRMNSWAQGEGQPGLGYIFWSDDQGGWGGPIAKNLGPEKTDGLMKALGLGQGDAAFFVAGDPKVFYKFAGAARTKVGTDLKLIDEGRFEFCWIVDFPMFEWSDEEKKYDFSHNPFSMPQGELDALLNKEPGEIVAYQYDIVCNGHELCSGAIRNHRPDVMLKAFEIAGYGPEVVEEQFGGMLNAFRHGAPPHGGLAPGIDRIVMLLAGETAIREVIAFPLNQQGQDLLMNAPSEVSEKQLKELHIRLAPPIKA.

An L-aspartate-binding site is contributed by E175. The tract at residues 199-202 is aspartate; the sequence is QQFK. The L-aspartate site is built by R221 and H451. Residue 221–223 participates in ATP binding; it reads RDE. E485 is a binding site for ATP. L-aspartate is bound at residue R492. 537–540 is an ATP binding site; it reads GIDR.

Belongs to the class-II aminoacyl-tRNA synthetase family. Type 1 subfamily. In terms of assembly, homodimer.

The protein resides in the cytoplasm. It carries out the reaction tRNA(Asx) + L-aspartate + ATP = L-aspartyl-tRNA(Asx) + AMP + diphosphate. Functionally, aspartyl-tRNA synthetase with relaxed tRNA specificity since it is able to aspartylate not only its cognate tRNA(Asp) but also tRNA(Asn). Reaction proceeds in two steps: L-aspartate is first activated by ATP to form Asp-AMP and then transferred to the acceptor end of tRNA(Asp/Asn). The polypeptide is Aspartate--tRNA(Asp/Asn) ligase (Phenylobacterium zucineum (strain HLK1)).